A 251-amino-acid polypeptide reads, in one-letter code: MTRLLVLGGTTEASRLAKTLADQGFEAVFSYAGRTGAPVAQPLPTRIGGFGGVAGLVDYLTREGVSHVIDATHPFAAQMSANAVAACAQTGVALCAFERAPWTAQAGDRWTHVPDLAAAVAALPQAPARVFLAIGKQHLRDFSAAPQHHYLLRLVDPPEGPLPLPDARAVIARGPFTVQGDTELLRSETITHVVAKNAGGAGAEAKLIAARSLGLPVILIDRPAVPARDICATLEGVMGWLADHGATPRGV.

It belongs to the precorrin-6x reductase family.

The enzyme catalyses precorrin-6B + NADP(+) = precorrin-6A + NADPH + 2 H(+). Its pathway is cofactor biosynthesis; adenosylcobalamin biosynthesis; cob(II)yrinate a,c-diamide from precorrin-2 (aerobic route): step 6/10. Functionally, catalyzes the reduction of the macrocycle of precorrin-6X into precorrin-6Y. The sequence is that of Precorrin-6A reductase (cobK) from Rhodobacter capsulatus (strain ATCC BAA-309 / NBRC 16581 / SB1003).